The following is a 394-amino-acid chain: MTQLETRTEPMVLNFGPHHPSMHGVLRLVVTLDGEDVVDCEPVIGYLHRGMEKIAENRTNVMFVPYVSRWDYAAGMFNEAITVNAPERLADVKVPRRASYIRVMMLELNRIANHLLWLGPFLADVGAQTPFFYIFREREMIYDLWEAATGQRMVNNNYFRIGGVAADLPYGWLEKLDDFCNWFGPKIDEYEKLITNNPIFRRRIEGLGTITREQAINWSLSGPMLRASGVAWDLRKVDHYECYDDFDWEVATAQEGCCFARYRVRLQEMRESLKILRQAAQQIPGGPTENLEAKRQLEGKDSEFYGFDYQIVAKKVAPTFKIPNGQLYTRVESGKGELGVFLMGNNDVTPWRWKIRAADFNNLQILPHLLKGVKVADIMAILGSIDVIMGSVDR.

It belongs to the complex I 49 kDa subunit family. NDH-1 can be composed of about 15 different subunits; different subcomplexes with different compositions have been identified which probably have different functions.

The protein resides in the cellular thylakoid membrane. It carries out the reaction a plastoquinone + NADH + (n+1) H(+)(in) = a plastoquinol + NAD(+) + n H(+)(out). The enzyme catalyses a plastoquinone + NADPH + (n+1) H(+)(in) = a plastoquinol + NADP(+) + n H(+)(out). In terms of biological role, NDH-1 shuttles electrons from an unknown electron donor, via FMN and iron-sulfur (Fe-S) centers, to quinones in the respiratory and/or the photosynthetic chain. The immediate electron acceptor for the enzyme in this species is believed to be plastoquinone. Couples the redox reaction to proton translocation, and thus conserves the redox energy in a proton gradient. Cyanobacterial NDH-1 also plays a role in inorganic carbon-concentration. This chain is NAD(P)H-quinone oxidoreductase subunit H, found in Synechococcus sp. (strain RCC307).